A 191-amino-acid chain; its full sequence is MGGSGSRLSKELLAEYQDLTFLTKQEILLAHRRFCELLPPEHRTVEESLHTRVSFEQILSLPELKANPFKERICMVFSTSPTRDSLSFEDFLDLLSVFSDTATPDIKSHYAFRIFDFDDDGTLDREDLSRLVNCLTGEGEDTRLSASEMKQLIDNILEESDIDRDGTINLSEFQHVISRSPDFASSFKIVL.

Glycine 2 is lipidated: N-myristoyl glycine. 2 EF-hand domains span residues 103–138 and 148–183; these read TPDIKSHYAFRIFDFDDDGTLDREDLSRLVNCLTGE and EMKQLIDNILEESDIDRDGTINLSEFQHVISRSPDF. Ca(2+) is bound by residues aspartate 116, aspartate 118, aspartate 120, threonine 122, aspartate 127, aspartate 161, aspartate 163, aspartate 165, threonine 167, and glutamate 172.

As to quaternary structure, monomer. Interacts with the heterodimeric integrin alpha-IIb/beta3 (ITGA2B-ITGB3). Interacts with ITGA2B (via cytoplasmic domain); the interaction is direct and calcium-dependent. Interacts with the protein kinases PLK2/SNK and PRKDC (via the region immediately upstream of the kinase domain). Interacts with PLK3; the interaction inhibits PLK3 kinase activity. Interacts with PSEN2. Interacts (via C-terminus) with F8. Interacts with NBR1 (via C-terminus). Interacts with FEZ1 (via C-terminus). Interacts with UBR5 (via C-terminus); the interaction is sensitive to DNA damage, and may target CIB1 for ubiquitin-mediated degradation. Interacts with IFI6; the interaction is direct. Interacts with BCL2. Interacts with ITPR3; the interaction occurs in a calcium dependent manner. Interacts with PTK2/FAK1. Interacts with MAP3K5; the interaction inhibits MAP3K5 activation by phosphorylation, and its subsequent interaction with TRAF2. Interacts (via C-terminal region) with STMN2 (via the N-terminal region); the interaction is direct, occurs in a calcium-dependent manner and attenuates the STMN2-induced neurite outgrowth inhibition. Interacts with SPHK1, the interaction occurs in a calcium-dependent manner. Interacts with ITGA2B (via C-terminal cytoplasmic tail); the interaction occurs upon platelet aggregation and is stabilized/increased in a calcium and magnesium-dependent manner. Interacts with PAK1 (via N-terminal region); the interaction is direct and occurs in a calcium-dependent manner. Interacts with RAC3 (via C-terminal region); the interaction induces their association with the cytoskeleton upon alpha-IIb/beta3 integrin-mediated adhesion. Interacts with ITGA5 and ITGAV. Interacts with MYO1C. Interacts with ITGA2B (via C-terminal cytoplasmic tail region). Interacts (via C-terminal region) with PPP3R1; the interaction increases upon cardiomyocytes hypertrophy. Interacts with CACNA1C; the interaction increases upon cardiomyocytes hypertrophy. Interacts with TAS1R2 (via C-terminus); this interaction is independent of the myristoylation state of CIB1. Interacts and forms a complex with TMC6 and TMC8; the interaction stabilizes each component of the complex. As to expression, expressed in cardiomyocytes and neurons (at protein level). Expressed during early neural development.

It localises to the membrane. It is found in the cell membrane. The protein localises to the sarcolemma. Its subcellular location is the apical cell membrane. The protein resides in the cell projection. It localises to the ruffle membrane. It is found in the filopodium tip. The protein localises to the growth cone. Its subcellular location is the lamellipodium. The protein resides in the cytoplasm. It localises to the cytoskeleton. It is found in the microtubule organizing center. The protein localises to the centrosome. Its subcellular location is the perinuclear region. The protein resides in the nucleus. It localises to the neuron projection. It is found in the perikaryon. In terms of biological role, calcium-binding protein that plays a role in the regulation of numerous cellular processes, such as cell differentiation, cell division, cell proliferation, cell migration, thrombosis, angiogenesis, cardiac hypertrophy and apoptosis. Involved in bone marrow megakaryocyte differentiation by negatively regulating thrombopoietin-mediated signaling pathway. Participates in the endomitotic cell cycle of megakaryocyte, a form of mitosis in which both karyokinesis and cytokinesis are interrupted. Plays a role in integrin signaling by negatively regulating alpha-IIb/beta3 activation in thrombin-stimulated megakaryocytes preventing platelet aggregation. Up-regulates PTK2/FAK1 activity, and is also needed for the recruitment of PTK2/FAK1 to focal adhesions; it thus appears to play an important role in focal adhesion formation. Positively regulates cell migration on fibronectin in a CDC42-dependent manner, the effect being negatively regulated by PAK1. Functions as a negative regulator of stress activated MAP kinase (MAPK) signaling pathways. Down-regulates inositol 1,4,5-trisphosphate receptor-dependent calcium signaling. Involved in sphingosine kinase SPHK1 translocation to the plasma membrane in a N-myristoylation-dependent manner preventing TNF-alpha-induced apoptosis. Regulates serine/threonine-protein kinase PLK3 activity for proper completion of cell division progression. Plays a role in microtubule (MT) dynamics during neuronal development; disrupts the MT depolymerization activity of STMN2 attenuating NGF-induced neurite outgrowth and the MT reorganization at the edge of lamellipodia. Promotes cardiomyocyte hypertrophy via activation of the calcineurin/NFAT signaling pathway. Stimulates calcineurin PPP3R1 activity by mediating its anchoring to the sarcolemma. In ischemia-induced (pathological or adaptive) angiogenesis, stimulates endothelial cell proliferation, migration and microvessel formation by activating the PAK1 and ERK1/ERK2 signaling pathway. Also promotes cancer cell survival and proliferation. May regulate cell cycle and differentiation of spermatogenic germ cells, and/or differentiation of supporting Sertoli cells. Forms a complex with TMC6/EVER1 and TMC8/EVER2 in lymphocytes and keratynocytes where CIB1 stabilizes TMC6 and TMC8 levels and reciprocally. The protein is Calcium and integrin-binding protein 1 (Cib1) of Rattus norvegicus (Rat).